A 588-amino-acid polypeptide reads, in one-letter code: MAAHDDDINRGTRPARGSEDPAGQVAYLEQEIAVLRRKLADSPRHTRILEERIVELQTNLAGVSAQNERLANTLREARDQIVALKEEVDRLAQPPAGFGVFLQANEDGTCDIFTGGRKLRVNVSPSVELDDLRRGQEVMLNEALNVVEAMQFERAGDIVTLKEILEDGERALVVGHTDEERVVRLAEPLLDITIRSGDALLLDSRSGYVYEVVPKSEVEELVLEEVPDIDYDKIGGLGDQIELIRDAVELPYLHPDLFKEHELRPPKGILLYGPPGCGKTLIAKAVANSLAKKVAEVTGQPAGKSYFLNIKGPELLNKYVGETERHIRLVFQRAREKASEGTPVIVFFDEMESLFRTRGSGVSSDVENTIVPQLLAEIDGVEGLENVIVIGASNREDMIDPAILRPGRLDVKIKIERPDAEAAKDIFAKYLTPGLPLHADDLSEHTGSREAAAHAMIQSVVERMYTESEENRFLEVTYANGDKEVLYFKDFNSGAMIQNIVDRAKKMAIKAFLEQGQKGLRVAHLLQACVDEFKENEDLPNTTNPDDWARISGKKGERIVFIRTLVTGKQGADTGRSIDTVANTGQYL.

Residues 1-10 (MAAHDDDINR) show a composition bias toward basic and acidic residues. A disordered region spans residues 1-22 (MAAHDDDINRGTRPARGSEDPA). A coiled-coil region spans residues 47–94 (RILEERIVELQTNLAGVSAQNERLANTLREARDQIVALKEEVDRLAQP). 276–281 (GCGKTL) provides a ligand contact to ATP. A docks into pockets in the proteasome alpha-ring region spans residues 587-588 (YL).

It belongs to the AAA ATPase family. As to quaternary structure, homohexamer. Assembles into a hexameric ring structure that caps the 20S proteasome core. Strongly interacts with the prokaryotic ubiquitin-like protein Pup through a hydrophobic interface; the interacting region of ARC lies in its N-terminal coiled-coil domain. There is one Pup binding site per ARC hexamer ring. Upon ATP-binding, the C-terminus of ARC interacts with the alpha-rings of the proteasome core, possibly by binding to the intersubunit pockets.

Its pathway is protein degradation; proteasomal Pup-dependent pathway. ATPase which is responsible for recognizing, binding, unfolding and translocation of pupylated proteins into the bacterial 20S proteasome core particle. May be essential for opening the gate of the 20S proteasome via an interaction with its C-terminus, thereby allowing substrate entry and access to the site of proteolysis. Thus, the C-termini of the proteasomal ATPase may function like a 'key in a lock' to induce gate opening and therefore regulate proteolysis. This is Proteasome-associated ATPase from Streptomyces griseus subsp. griseus (strain JCM 4626 / CBS 651.72 / NBRC 13350 / KCC S-0626 / ISP 5235).